Here is a 683-residue protein sequence, read N- to C-terminus: MDFTTMTMASNMATSTTTTATSAHASINSSSNFNIDIDSNQNTPSILINNNSDSSNGKNTDFNGVNNIHQKNIMNNTNNVHLYSPNIMDQTLLTPQDIAKLRRESIAHSQGMGGVSWGSISVGSWLRDEIISRRNSIVPASANGAASAAASATTTATNTLQIQQPTKRPSVSNPPYHRGYSISPQIAYTAYLPNLEKQYCKDYSCCGLSLPGLHDLLRHYEEAHISTSPNTTNMSQIPMNSAGNTSSSVRMTNNTSSANYNLQNNMAANTKNAGHKTNTMQAHSSNATNNTSINNMHANLQSNMDSNSTIRQSQHPHHQQNIIQQQLQSNSVNHTSGAVPTPSVMGSATASSTTANPNVISITGAPNSGLSMANHSQQLHLNGNLVDAVSTNDVFLRTSNSPSRHVPHNKQINSNNNSGININNNTSHNSNINMGSKNAMVNRPHTFNNYSLNKTSRNPIQHQSRKIDPHQTDLSPLVLVQDIDLSFMDDDILGPSNHNSMNSVVNPTTGSHNYNTFHSSVHAKSSQNMVEDQDIDDIDDDDDVDDDDDDDDDDDTENGSSSNGKSVHNNNYKMPQQAYIDDPARRLYVMDHEEQKPFKCPVIGCEKTYKNQNGLKYHRLHGHQNQKLHENPDGTFSVIDPDSTDSFGDGMGSAKDKPYRCEVCGKRYKNLNGLKYHRGHSTH.

6 disordered regions span residues 156–178 (ATNT…PYHR), 305–324 (DSNS…NIIQ), 332–357 (VNHT…TANP), 399–420 (SNSP…NSGI), 498–517 (HNSM…YNTF), and 535–573 (IDDI…NNYK). The span at 160-173 (LQIQQPTKRPSVSN) shows a compositional bias: polar residues. The segment at 230–458 (NTTNMSQIPM…NYSLNKTSRN (229 aa)) is prion domain (PrD). Residues 535–557 (IDDIDDDDDVDDDDDDDDDDDTE) show a composition bias toward acidic residues. Residues 558-573 (NGSSSNGKSVHNNNYK) show a composition bias toward polar residues. 2 consecutive C2H2-type zinc fingers follow at residues 598–623 (FKCP…LHGH) and 659–683 (YRCE…HSTH).

Interacts with the target of rapamycin complex 1 (TORC1) in a rapamycin-dependent manner. Interacts with MRS6. Phosphorylated by TORC1 kinase at multiple sites. Phosphorylation regulates nuclear localization and RP promoter binding.

It localises to the cytoplasm. The protein localises to the nucleus. Transcription factor that regulates ribosomal protein (RP) and ribosome biogenesis (Ribi) gene expression in response to nutrients and stress. Promotes RP gene expression under optimal growth conditions. Leaves the nucleus upon environmental challenges, resulting in a down-regulation of RP gene transcription. The effect of the environmental cues on SFP1 localization is mediated through the TOR pathway. Also regulates the expression of genes involved in the G2/M transition during the mitotic cell cycle and the DNA-damage response. Required for carbon-source modulation of cell size. This Saccharomyces cerevisiae (strain ATCC 204508 / S288c) (Baker's yeast) protein is Transcription factor SFP1 (SFP1).